Consider the following 150-residue polypeptide: Flagellar assembly factor FliW (150 aa).

This sequence belongs to the FliW family. Interacts with translational regulator CsrA and flagellin(s).

Its subcellular location is the cytoplasm. Its function is as follows. Acts as an anti-CsrA protein, binds CsrA and prevents it from repressing translation of its target genes, one of which is flagellin. Binds to flagellin and participates in the assembly of the flagellum. The chain is Flagellar assembly factor FliW from Leptospira borgpetersenii serovar Hardjo-bovis (strain JB197).